A 469-amino-acid polypeptide reads, in one-letter code: ATP synthase subunit beta (469 aa).

Gly156–Thr163 contributes to the ATP binding site.

The protein belongs to the ATPase alpha/beta chains family. F-type ATPases have 2 components, CF(1) - the catalytic core - and CF(0) - the membrane proton channel. CF(1) has five subunits: alpha(3), beta(3), gamma(1), delta(1), epsilon(1). CF(0) has three main subunits: a(1), b(2) and c(9-12). The alpha and beta chains form an alternating ring which encloses part of the gamma chain. CF(1) is attached to CF(0) by a central stalk formed by the gamma and epsilon chains, while a peripheral stalk is formed by the delta and b chains.

It is found in the cell membrane. It carries out the reaction ATP + H2O + 4 H(+)(in) = ADP + phosphate + 5 H(+)(out). Functionally, produces ATP from ADP in the presence of a proton gradient across the membrane. The catalytic sites are hosted primarily by the beta subunits. The protein is ATP synthase subunit beta of Lactococcus lactis subsp. cremoris (strain SK11).